Consider the following 154-residue polypeptide: Deoxyuridine 5'-triphosphate nucleotidohydrolase (154 aa).

Residues 64 to 66 (RSG), Asn77, 81 to 83 (TID), and Lys91 contribute to the substrate site.

It belongs to the dUTPase family. In terms of assembly, homotrimer. It depends on Mg(2+) as a cofactor.

It catalyses the reaction dUTP + H2O = dUMP + diphosphate + H(+). It participates in pyrimidine metabolism; dUMP biosynthesis; dUMP from dCTP (dUTP route): step 2/2. Its function is as follows. This enzyme is involved in nucleotide metabolism: it produces dUMP, the immediate precursor of thymidine nucleotides and it decreases the intracellular concentration of dUTP so that uracil cannot be incorporated into DNA. This Mycobacterium marinum (strain ATCC BAA-535 / M) protein is Deoxyuridine 5'-triphosphate nucleotidohydrolase.